We begin with the raw amino-acid sequence, 165 residues long: 2-C-methyl-D-erythritol 2,4-cyclodiphosphate synthase (165 aa).

Residues Asp13 and His15 each coordinate a divalent metal cation. 4-CDP-2-C-methyl-D-erythritol 2-phosphate is bound by residues 13–15 and 39–40; these read DRH and HS. An a divalent metal cation-binding site is contributed by His47. 4-CDP-2-C-methyl-D-erythritol 2-phosphate is bound by residues 61 to 63 and Phe141; that span reads DIG.

Belongs to the IspF family. Homotrimer. Requires a divalent metal cation as cofactor.

It catalyses the reaction 4-CDP-2-C-methyl-D-erythritol 2-phosphate = 2-C-methyl-D-erythritol 2,4-cyclic diphosphate + CMP. The protein operates within isoprenoid biosynthesis; isopentenyl diphosphate biosynthesis via DXP pathway; isopentenyl diphosphate from 1-deoxy-D-xylulose 5-phosphate: step 4/6. In terms of biological role, involved in the biosynthesis of isopentenyl diphosphate (IPP) and dimethylallyl diphosphate (DMAPP), two major building blocks of isoprenoid compounds. Catalyzes the conversion of 4-diphosphocytidyl-2-C-methyl-D-erythritol 2-phosphate (CDP-ME2P) to 2-C-methyl-D-erythritol 2,4-cyclodiphosphate (ME-CPP) with a corresponding release of cytidine 5-monophosphate (CMP). This is 2-C-methyl-D-erythritol 2,4-cyclodiphosphate synthase from Thermotoga neapolitana (strain ATCC 49049 / DSM 4359 / NBRC 107923 / NS-E).